The primary structure comprises 505 residues: Maturase K (505 aa).

Belongs to the intron maturase 2 family. MatK subfamily.

The protein localises to the plastid. The protein resides in the chloroplast. Its function is as follows. Usually encoded in the trnK tRNA gene intron. Probably assists in splicing its own and other chloroplast group II introns. This chain is Maturase K, found in Rhizophora stylosa (Bakau).